A 350-amino-acid chain; its full sequence is Ketol-acid reductoisomerase (NADP(+)) (350 aa).

A KARI N-terminal Rossmann domain is found at 4–187; that stretch reads VSITTDYSRM…GGARANIIKT (184 aa). Residues 30–33, arginine 53, threonine 58, and 88–91 contribute to the NADP(+) site; these read YGSQ and DMVQ. Histidine 113 is a catalytic residue. Glycine 139 is a binding site for NADP(+). A KARI C-terminal knotted domain is found at 188-333; that stretch reads TFKEETETDL…KQLRAKMVWL (146 aa). Residues aspartate 196, glutamate 200, glutamate 232, and glutamate 236 each contribute to the Mg(2+) site. Serine 257 provides a ligand contact to substrate.

Belongs to the ketol-acid reductoisomerase family. It depends on Mg(2+) as a cofactor.

The catalysed reaction is (2R)-2,3-dihydroxy-3-methylbutanoate + NADP(+) = (2S)-2-acetolactate + NADPH + H(+). The enzyme catalyses (2R,3R)-2,3-dihydroxy-3-methylpentanoate + NADP(+) = (S)-2-ethyl-2-hydroxy-3-oxobutanoate + NADPH + H(+). Its pathway is amino-acid biosynthesis; L-isoleucine biosynthesis; L-isoleucine from 2-oxobutanoate: step 2/4. The protein operates within amino-acid biosynthesis; L-valine biosynthesis; L-valine from pyruvate: step 2/4. Involved in the biosynthesis of branched-chain amino acids (BCAA). Catalyzes an alkyl-migration followed by a ketol-acid reduction of (S)-2-acetolactate (S2AL) to yield (R)-2,3-dihydroxy-isovalerate. In the isomerase reaction, S2AL is rearranged via a Mg-dependent methyl migration to produce 3-hydroxy-3-methyl-2-ketobutyrate (HMKB). In the reductase reaction, this 2-ketoacid undergoes a metal-dependent reduction by NADPH to yield (R)-2,3-dihydroxy-isovalerate. This Xylella fastidiosa (strain Temecula1 / ATCC 700964) protein is Ketol-acid reductoisomerase (NADP(+)).